The following is a 381-amino-acid chain: Creatine kinase B-type (381 aa).

Phosphoserine is present on Ser4. In terms of domain architecture, Phosphagen kinase N-terminal spans 11–98; the sequence is KLRFPAEDEF…FDPIIEDRHG (88 aa). Thr35 carries the phosphothreonine modification. Lys45 is covalently cross-linked (Glycyl lysine isopeptide (Lys-Gly) (interchain with G-Cter in ubiquitin)). A creatine-binding site is contributed by Val72. Over residues 96 to 110 the composition is skewed to basic and acidic residues; sequence RHGGYKPSDEHKTDL. The disordered stretch occupies residues 96 to 123; it reads RHGGYKPSDEHKTDLNPDNLQGGDDLDP. Residues Lys101 and Lys107 each participate in a glycyl lysine isopeptide (Lys-Gly) (interchain with G-Cter in ubiquitin) cross-link. At Tyr125 the chain carries Phosphotyrosine. Residues 125–367 form the Phosphagen kinase C-terminal domain; the sequence is YVLSSRVRTG…KLLIEMEQRL (243 aa). Residues 128 to 132, Arg130, Arg132, and His191 contribute to the ATP site; that span reads SSRVR. An internal MTS-like signal region spans residues 130–138; the sequence is RVRTGRSIR. Residue Ser199 is modified to Phosphoserine. Residue Glu232 coordinates creatine. Arg236 lines the ATP pocket. 3'-nitrotyrosine is present on Tyr269. Creatine is bound at residue Ser285. ATP is bound by residues Arg292, 292-296, Arg320, 320-325, and Asp335; these read RAGVH and RGTGGV. The residue at position 322 (Thr322) is a Phosphothreonine. A Glycyl lysine isopeptide (Lys-Gly) (interchain with G-Cter in ubiquitin) cross-link involves residue Lys381.

The protein belongs to the ATP:guanido phosphotransferase family. Dimer of identical or non-identical chains, which can be either B (brain type) or M (muscle type). With MM being the major form in skeletal muscle and myocardium, MB existing in myocardium, and BB existing in many tissues, especially brain. Interacts with SLC12A6 (via C-terminus); the interaction may be required for SLC12A6 potassium-chloride cotransport activity. In terms of processing, ubiquitinated by the ECS(ASB9) complex, leading to its degradation by the proteasome.

The protein localises to the cytoplasm. It is found in the cytosol. Its subcellular location is the mitochondrion. It localises to the cell membrane. It carries out the reaction creatine + ATP = N-phosphocreatine + ADP + H(+). Its function is as follows. Reversibly catalyzes the transfer of phosphate between ATP and various phosphogens (e.g. creatine phosphate). Creatine kinase isoenzymes play a central role in energy transduction in tissues with large, fluctuating energy demands, such as skeletal muscle, heart, brain and spermatozoa. Acts as a key regulator of adaptive thermogenesis as part of the futile creatine cycle: localizes to the mitochondria of thermogenic fat cells and acts by mediating phosphorylation of creatine to initiate a futile cycle of creatine phosphorylation and dephosphorylation. During the futile creatine cycle, creatine and N-phosphocreatine are in a futile cycle, which dissipates the high energy charge of N-phosphocreatine as heat without performing any mechanical or chemical work. The polypeptide is Creatine kinase B-type (CKB) (Sus scrofa (Pig)).